A 145-amino-acid chain; its full sequence is L-alanine exporter AlaE (145 aa).

Transmembrane regions (helical) follow at residues phenylalanine 16–methionine 36, leucine 42–tyrosine 62, leucine 86–alanine 106, and isoleucine 111–tyrosine 131.

It belongs to the AlaE exporter family.

The protein localises to the cell inner membrane. Its function is as follows. Exports L-alanine. This chain is L-alanine exporter AlaE, found in Pectobacterium parmentieri (strain WPP163) (Pectobacterium wasabiae (strain WPP163)).